Here is a 365-residue protein sequence, read N- to C-terminus: Peptide chain release factor 2 (365 aa).

Q251 carries the N5-methylglutamine modification.

It belongs to the prokaryotic/mitochondrial release factor family. Methylated by PrmC. Methylation increases the termination efficiency of RF2.

Its subcellular location is the cytoplasm. Peptide chain release factor 2 directs the termination of translation in response to the peptide chain termination codons UGA and UAA. This chain is Peptide chain release factor 2, found in Campylobacter jejuni subsp. doylei (strain ATCC BAA-1458 / RM4099 / 269.97).